A 292-amino-acid chain; its full sequence is Short chain dehydrogenase/reductase CPUR_05418 (292 aa).

Ile44 and Arg156 together coordinate NADP(+). Catalysis depends on proton donor residues Ser172 and Tyr186. The NADP(+) site is built by Tyr186, Lys190, Ile221, and Thr223. The Lowers pKa of active site Tyr role is filled by Lys190.

The protein belongs to the short-chain dehydrogenases/reductases (SDR) family.

It participates in secondary metabolite biosynthesis. Its function is as follows. Short chain dehydrogenase/reductase; part of the ergochrome gene cluster responsible for the typical purple-black color of the ergot sclerotia. The ergochrome gene cluster produces several ergot pigments including the yellow ergochrome secalonic acid and its derivatives, as well as the red anthraquinones endocrocin and clavorubin. The pathway begins with the synthesis of atrochrysone thioester by the polyketide synthase (PKS) CPUR_05437. The atrochrysone carboxyl ACP thioesterase CPUR_05436 then breaks the thioester bond and releases the atrochrysone carboxylic acid from CPUR_05437. The atrochrysone carboxylic acid is then converted to atrochrysone which is further transformed into emodin anthrone. The next step is performed by the anthrone oxygenase CPUR_05434 that catalyzes the oxidation of emodinanthrone to emodin. Emodin is further modified to yield monodictyphenone via several steps involving CPUR_05427, CPUR_05428, CPUR_05429 and CPUR_05430. The short chain dehydrogenase/reductase CPUR_05418 then catalyzes the C-5 ketoreduction to give the xanthone skeleton of the monomeric units. Ergochromes formation requires further dimerization steps of different xanthone units, probably catalyzed by the cytochrome P450 monooxygenase CPUR_05419. CPUR_05425, CPUR_05426 and CPUR_05431 are unique to Claviceps, thus it is likely that they are involved in further modification of xanthone units or in their dimerization. The yellow ergochromes and the red anthraquinone pigments endocrocin and clavorubin are products from the same PKS derived precursors and the latter are likely shunt products in the pathway of xanthone biosynthesis. It is proposed that atrochrysone carboxylic acid released from the PKS CPUR_05437 can also be converted to endocrocin anthrone which is further oxidized into endocrocin by CPUR_05435. Endocrocin could be then modified to clavorubin, possibly by CPUR_05423 and CPUR_05431. Clavorubin is the principal anthraquinone metabolite produced by the cluster with a much higher yield compared to endocrocin. The sequence is that of Short chain dehydrogenase/reductase CPUR_05418 from Claviceps purpurea (strain 20.1) (Ergot fungus).